We begin with the raw amino-acid sequence, 334 residues long: Glutaminase (334 aa).

Substrate is bound by residues Ser-76, Asn-126, Glu-170, Asn-177, Tyr-201, Tyr-253, and Val-271.

It belongs to the glutaminase family. In terms of assembly, homotetramer.

It carries out the reaction L-glutamine + H2O = L-glutamate + NH4(+). This Nostoc sp. (strain PCC 7120 / SAG 25.82 / UTEX 2576) protein is Glutaminase.